The chain runs to 67 residues: KDGYLVEVTGCKKSCYKLGENKFCNRECKMKHRGGSYGYCYFFGCYCEGLAESTPTWPLPNKSCGKK.

In terms of domain architecture, LCN-type CS-alpha/beta spans 1-65 (KDGYLVEVTG…TWPLPNKSCG (65 aa)). Intrachain disulfides connect Cys-11–Cys-64, Cys-15–Cys-40, Cys-24–Cys-45, and Cys-28–Cys-47. Cys-64 carries the post-translational modification Cysteine amide. Residues 65–67 (GKK) constitute a propeptide that is removed on maturation.

This sequence belongs to the long (4 C-C) scorpion toxin superfamily. Sodium channel inhibitor family. Beta subfamily. In terms of tissue distribution, expressed by the venom gland.

Its subcellular location is the secreted. Beta toxins bind voltage-independently at site-4 of sodium channels (Nav) and shift the voltage of activation toward more negative potentials thereby affecting sodium channel activation and promoting spontaneous and repetitive firing. This Centruroides exilicauda (Bark scorpion) protein is Neurotoxin Cex10.